The sequence spans 260 residues: UPF0246 protein Bphyt_1375 (260 aa).

The protein belongs to the UPF0246 family.

The sequence is that of UPF0246 protein Bphyt_1375 from Paraburkholderia phytofirmans (strain DSM 17436 / LMG 22146 / PsJN) (Burkholderia phytofirmans).